Consider the following 990-residue polypeptide: Tyrosine-protein phosphatase 3 (990 aa).

4 disordered regions span residues 47–88 (QSQS…SPSV), 100–193 (NKIN…SNIE), 246–414 (PNQQ…SFSQ), and 431–452 (KPEM…HNDL). Low complexity-rich tracts occupy residues 52–88 (NTNT…SPSV) and 100–117 (NKIN…NNNN). The span at 127–136 (LKLSNTMIIK) shows a compositional bias: polar residues. 5 stretches are compositionally biased toward low complexity: residues 137 to 191 (NNNN…SNSN), 250 to 271 (SSSS…SSLL), 278 to 293 (NNST…NSSN), 310 to 327 (QAQV…QHQQ), and 334 to 413 (NLSS…TSFS). Residues 422-715 (MRLEFEMIKK…IFIFKVINDV (294 aa)) enclose the Tyrosine-protein phosphatase domain. A compositionally biased stretch (basic residues) spans 437 to 447 (KKSHKHHQRHY). The Phosphocysteine intermediate role is filled by cysteine 650. Residues 786–795 (PPQQQQDNPF) show a composition bias toward polar residues. Disordered regions lie at residues 786–814 (PPQQ…NISI) and 834–990 (LQQQ…IKCF). 2 stretches are compositionally biased toward low complexity: residues 796 to 806 (SKSSIKISPSP) and 834 to 850 (LQQQ…DNPP). The span at 851 to 868 (LNMSSNSIKFPPVTSLSS) shows a compositional bias: polar residues. Composition is skewed to low complexity over residues 878–916 (NDNN…DNNG) and 924–968 (GSFL…SDNN).

The protein belongs to the protein-tyrosine phosphatase family. Non-receptor class subfamily. In the anterior-like and prestalk cell types.

It is found in the cytoplasm. The enzyme catalyses O-phospho-L-tyrosyl-[protein] + H2O = L-tyrosyl-[protein] + phosphate. Its function is as follows. Seems to dephosphorylate a protein of 130 kDa (p130). The protein is Tyrosine-protein phosphatase 3 (ptpC) of Dictyostelium discoideum (Social amoeba).